The sequence spans 548 residues: Natural resistance-associated macrophage protein 1 (548 aa).

The interval 1-38 (MPGDMGPPKQGGTRYGSISSPPSPGPQQAPPGGTYLSE) is disordered. The Cytoplasmic segment spans residues 1-55 (MPGDMGPPKQGGTRYGSISSPPSPGPQQAPPGGTYLSEKIPIPDTESGAFSLRKL). Residues 56 to 73 (WAFTGPGFLMSIAFLDPG) form a helical membrane-spanning segment. Topologically, residues 74-82 (NIESDLQAG) are extracellular. The helical transmembrane segment at 83–102 (AVAGFKLLWVLLWATVLGLL) threads the bilayer. Over 103–139 (CQRLAARLGVVTGKDLGEVCHLYYPKVPRILLWLTIE) the chain is Cytoplasmic. A helical transmembrane segment spans residues 140–160 (LAIVGSDMQEVIGTAIAFSLL). Residues 161–164 (SAGR) lie on the Extracellular side of the membrane. A helical transmembrane segment spans residues 165–184 (IPLWGGVLITIVDTFFFLFL). Residues 185 to 193 (DNYGLRKLE) lie on the Cytoplasmic side of the membrane. A helical transmembrane segment spans residues 194–214 (AFFGFLITIMALTFGYEYVVA). The Extracellular portion of the chain corresponds to 215–237 (RPAQGALLQGLFLPSCAGCGQPE). The chain crosses the membrane as a helical span at residues 238-256 (LLQAVGIVGAIIMPHNIYL). At 257–284 (HSSLVKSREVDRSRRADIREANMYFLIE) the chain is on the cytoplasmic side. A helical membrane pass occupies residues 285–304 (ATIALSVSFLINLFVMAVFG). Residues 305–346 (QAFYKQTNQAAFNICANSSLHDYATIFPRNNLTVAVDIYQGG) are Extracellular-facing. N-linked (GlcNAc...) asparagine glycosylation is found at Asn321 and Asn335. Residues 347–366 (VILGCLFGPAALYIWAVGLL) form a helical membrane-spanning segment. Topologically, residues 367-397 (AAGQSSTMTGTYAGQFVMEGFLKLRWSRFAR) are cytoplasmic. A helical transmembrane segment spans residues 398 to 415 (VLLTRSCAILPTVLVAVF). Residues 416 to 426 (RDLRDLSGLND) are Extracellular-facing. The helical transmembrane segment at 427–447 (LLNVLQSLLLPFAVLPILTFT) threads the bilayer. Residues 448–463 (SMPAVMQEFANGLVSK) lie on the Cytoplasmic side of the membrane. The helical transmembrane segment at 464 to 485 (VISSSIMVLVCAVNLYFVISYV) threads the bilayer. At 486–493 (PSLPHPDY) the chain is on the extracellular side. Residues 494–513 (FSLVALLAAAYLGLTTYLVW) traverse the membrane as a helical segment. Residues 514–548 (TCLITQGATLLAHSSHQRFLYGLPEEDQENGRTSG) lie on the Cytoplasmic side of the membrane.

Belongs to the NRAMP family.

The protein resides in the late endosome membrane. Its subcellular location is the lysosome membrane. It carries out the reaction Zn(2+)(in) + H(+)(out) = Zn(2+)(out) + H(+)(in). The catalysed reaction is Fe(2+)(in) + H(+)(out) = Fe(2+)(out) + H(+)(in). It catalyses the reaction Mn(2+)(in) + H(+)(out) = Mn(2+)(out) + H(+)(in). In terms of biological role, macrophage-specific antiporter that fluxes metal ions in either direction against a proton gradient. Localized to late endosomal lysosomal membranes, delivers bivalent cations from the cytosol into these acidic compartments where they may directly affect antimicrobial activity. Involved in iron metabolism and host natural resistance to infection with intracellular parasites. Pathogen resistance involves sequestration of Fe(2+) and Mn(2+), cofactors of both prokaryotic and eukaryotic catalases and superoxide dismutases, not only to protect the macrophage against its own generation of reactive oxygen species, but to deny the cations to the pathogen for synthesis of its protective enzymes. The chain is Natural resistance-associated macrophage protein 1 (SLC11A1) from Cervus elaphus (Red deer).